We begin with the raw amino-acid sequence, 661 residues long: Bifunctional xylanase/xylan deacetylase (661 aa).

Positions 1 to 27 (MKLPTLGKCVVRTLMGAVALGAISVNA) are cleaved as a signal peptide. Positions 29-226 (TLSSNSTGTN…SRGSSDITVS (198 aa)) constitute a GH11 domain. Residue Glu116 is the Nucleophile; for endoxylanase activity of the active site. Glu213 (proton donor; for endoxylanase activity) is an active-site residue. The disordered stretch occupies residues 220–259 (SSDITVSEGTSGGGTSSVGGASSSVNSSTGGGSSGGITVR). Residues 237–247 (VGGASSSVNSS) are compositionally biased toward low complexity. The polysaccharide deacetylase stretch occupies residues 394–577 (SNCSGYVGIT…AKGLCPGRID (184 aa)). Residues 398-574 (GYVGITFDDG…NLRAKGLCPG (177 aa)) form the NodB homology domain. The interval 578-610 (PNTGRAVAPSSSGGSSSVALSSSSRSSSSAGGN) is disordered. Over residues 581–608 (GRAVAPSSSGGSSSVALSSSSRSSSSAG) the composition is skewed to low complexity. The CBM10 domain occupies 616–645 (QCNWWGTFYPLCQTQTSGWGWENSRSCIST).

It in the N-terminal section; belongs to the glycosyl hydrolase 11 (cellulase G) family.

Its subcellular location is the secreted. It catalyses the reaction Endohydrolysis of (1-&gt;4)-beta-D-xylosidic linkages in xylans.. The enzyme catalyses Deacetylation of xylans and xylo-oligosaccharides.. Its pathway is glycan degradation; xylan degradation. In terms of biological role, endo-acting xylanase which specifically cleaves internal linkages on the xylan backbone, releasing xylooligosaccharides. Is able to hydrolyze oat spelt xylan and the arabinoxylans from wheat and rye, releasing xylobiose as the major product. Also likely catalyzes, via its C-terminal domain, the removal of acetyl groups from acetylated xylan. Thus, has the capability of hydrolyzing acetylated xylan. Does not attack mannan, galactan, arabinan or any cellulosic substrates. The chain is Bifunctional xylanase/xylan deacetylase (xyn11A) from Cellvibrio japonicus (Pseudomonas fluorescens subsp. cellulosa).